The primary structure comprises 201 residues: Dephospho-CoA kinase (201 aa).

A DPCK domain is found at 4–201 (SVGLTGNIAS…KYLREAKIKQ (198 aa)). ATP is bound at residue 12–17 (ASGKST).

Belongs to the CoaE family.

It localises to the cytoplasm. The catalysed reaction is 3'-dephospho-CoA + ATP = ADP + CoA + H(+). Its pathway is cofactor biosynthesis; coenzyme A biosynthesis; CoA from (R)-pantothenate: step 5/5. In terms of biological role, catalyzes the phosphorylation of the 3'-hydroxyl group of dephosphocoenzyme A to form coenzyme A. The sequence is that of Dephospho-CoA kinase from Legionella pneumophila (strain Lens).